Here is a 423-residue protein sequence, read N- to C-terminus: NDP-N-acetyl-D-galactosaminuronic acid dehydrogenase (423 aa).

NAD(+) is bound at residue 11–28 (TISVVGLGYIGLPTATVL). The active-site Proton donor/acceptor is lysine 218. Cysteine 272 serves as the catalytic Nucleophile.

Belongs to the UDP-glucose/GDP-mannose dehydrogenase family.

In terms of biological role, probably involved in synthesis of sugar components of EPS I, by converting NDP-N-acetyl-D-galactosamine into NDP-N-acetyl-D-galactosaminuronic acid. The sequence is that of NDP-N-acetyl-D-galactosaminuronic acid dehydrogenase (epsD) from Ralstonia solanacearum (Pseudomonas solanacearum).